The following is a 481-amino-acid chain: MPALHNPSSPPPSYEAVTSYRNGNSIDSGDKRQQCSRLMKITSNGRPYSKDFLELFSTMVISTNFSRNRYRFSYVENSCTLLQLLSTLENLQLSQVNRIKSRCGSKVLKSTTKFTIPKTAAKCLCNTFLNARLLQIVNNPSARKFSNEKCLLQLTRKGYSVVSEFLQHNGHNSQAELYASKWNHSAPVIVSISRFSSTDQILKDSSFCEMLLVRMLGSVHEIGKSKNPLLVPVYSVSSPSPKDSLSKVTKYQMFGIDIAEWLMCNTMLLDWSEMETVASDLLIHSYIAYENNSETPLKFSYAKGVSYFLTGKGIATLGWTKNVSNNKLINKINEVEKGSTNKEILETILRKPNLQTYFFEFLKKNFCDENQRFYSEVCEFNDYFSHANETNDHEAIRESFAHACGIYNCFLSSNAPNAVNLPSDLYEKITNHMALAMEVEPLNEWLQLIHILLLEAQTAVLDLMAGDSLLKFLELNGGLGI.

Residues 1 to 31 (MPALHNPSSPPPSYEAVTSYRNGNSIDSGDK) are disordered. A fungal-DR region spans residues 33-227 (QQCSRLMKIT…SVHEIGKSKN (195 aa)). Positions 232-312 (PVYSVSSPSP…KGVSYFLTGK (81 aa)) constitute a DEP domain. In terms of domain architecture, RGS spans 344–474 (ILETILRKPN…AGDSLLKFLE (131 aa)).

Its subcellular location is the nucleus. The protein localises to the cytoplasm. In terms of biological role, negatively regulates pheromone signaling during mating. Acts in a negative feedback loop that is essential for the mating process. This loop acts to down-regulate cellular sensitivity to pheromone. Activated by ste11. The protein is Regulator of G-protein signaling 1 (rgs1) of Schizosaccharomyces pombe (strain 972 / ATCC 24843) (Fission yeast).